The chain runs to 394 residues: S-adenosylmethionine synthase (394 aa).

Residue histidine 18 participates in ATP binding. Residue aspartate 20 coordinates Mg(2+). Glutamate 46 lines the K(+) pocket. L-methionine is bound by residues glutamate 59 and glutamine 104. Residues 104-114 (QSPDIAQGVDA) are flexible loop. ATP-binding positions include 174–176 (DCK), 240–241 (KF), aspartate 249, 255–256 (RK), alanine 272, and lysine 276. Aspartate 249 serves as a coordination point for L-methionine. Lysine 280 provides a ligand contact to L-methionine.

Belongs to the AdoMet synthase family. In terms of assembly, homotetramer; dimer of dimers. Mg(2+) is required as a cofactor. The cofactor is K(+).

The protein localises to the cytoplasm. The enzyme catalyses L-methionine + ATP + H2O = S-adenosyl-L-methionine + phosphate + diphosphate. Its pathway is amino-acid biosynthesis; S-adenosyl-L-methionine biosynthesis; S-adenosyl-L-methionine from L-methionine: step 1/1. In terms of biological role, catalyzes the formation of S-adenosylmethionine (AdoMet) from methionine and ATP. The overall synthetic reaction is composed of two sequential steps, AdoMet formation and the subsequent tripolyphosphate hydrolysis which occurs prior to release of AdoMet from the enzyme. In Akkermansia muciniphila (strain ATCC BAA-835 / DSM 22959 / JCM 33894 / BCRC 81048 / CCUG 64013 / CIP 107961 / Muc), this protein is S-adenosylmethionine synthase.